The sequence spans 294 residues: Flavin-dependent thymidylate synthase (294 aa).

The 224-residue stretch at 27–250 folds into the ThyX domain; that stretch reads GFIRVIDYMG…PFVYEAFEEY (224 aa). FAD-binding positions include T73, 96-98, and E104; that span reads RHR. DUMP contacts are provided by residues 93-96, 104-108, and R189; these read QWIR and EYSAR. A ThyX motif motif is present at residues 96 to 106; that stretch reads RHRTASVNEYS. FAD contacts are provided by residues 205–207 and H211; that span reads NLH. R216 lines the dUMP pocket. The active-site Involved in ionization of N3 of dUMP, leading to its activation is R216.

The protein belongs to the thymidylate synthase ThyX family. Homotetramer. The cofactor is FAD.

It catalyses the reaction dUMP + (6R)-5,10-methylene-5,6,7,8-tetrahydrofolate + NADPH + H(+) = dTMP + (6S)-5,6,7,8-tetrahydrofolate + NADP(+). It functions in the pathway pyrimidine metabolism; dTTP biosynthesis. Catalyzes the reductive methylation of 2'-deoxyuridine-5'-monophosphate (dUMP) to 2'-deoxythymidine-5'-monophosphate (dTMP) while utilizing 5,10-methylenetetrahydrofolate (mTHF) as the methyl donor, and NADPH and FADH(2) as the reductant. In Rickettsia conorii (strain ATCC VR-613 / Malish 7), this protein is Flavin-dependent thymidylate synthase.